The chain runs to 257 residues: K88 minor fimbrial subunit FaeJ (257 aa).

The N-terminal stretch at 1–26 (MLNIIHRLKSGMFPALFFLTSASVLA) is a signal peptide.

It is found in the fimbrium. In terms of biological role, K88 minor fimbrial subunit, plays an essential role in the biogenesis of the K88 fimbriae. Fimbriae (also called pili), are polar filaments radiating from the surface of the bacterium to a length of 0.5-1.5 micrometers and numbering 100-300 per cell. They enable bacteria to colonize the epithelium of specific host organs. The sequence is that of K88 minor fimbrial subunit FaeJ (faeJ) from Escherichia coli.